A 481-amino-acid polypeptide reads, in one-letter code: Amino acid permease 6 (481 aa).

Residues 1 to 36 (MEKKKSMFVEQSFPEHEIGDTNKNFDEDGRDKRTGT) are Cytoplasmic-facing. A run of 2 helical transmembrane segments spans residues 37–57 (WMTG…LSLA) and 58–78 (WAIA…FSFI). The Cytoplasmic portion of the chain corresponds to 79 to 125 (TYFTSTMLADCYRSPDPVTGKRNYTYMEVVRSYLGGRKVQLCGLAQY). Residues 126-146 (GNLIGITIGYTITASISMVAV) form a helical membrane-spanning segment. Residues 147 to 167 (KRSNCFHKNGHNVKCATSNTP) are Extracellular-facing. A helical transmembrane segment spans residues 168–188 (FMIIFAIIQIILSQIPNFHNL). The Cytoplasmic segment spans residues 189–190 (SW). Residues 191–211 (LSILAAVMSFCYASIGVGLSI) form a helical membrane-spanning segment. Residues 212 to 242 (AKAAGGGEHVRTTLTGVTVGIDVSGAEKIWR) are Extracellular-facing. Residues 243–263 (TFQAIGDIAFAYAYSTVLIEI) traverse the membrane as a helical segment. Residues 264–283 (QDTLKAGPPSENKAMKRASL) lie on the Cytoplasmic side of the membrane. A helical membrane pass occupies residues 284–304 (VGVSTTTFFYMLCGCVGYAAF). Residues 305 to 321 (GNDAPGNFLTGFGFYEP) lie on the Extracellular side of the membrane. Residues 322–342 (FWLIDFANVCIAVHLIGAYQV) traverse the membrane as a helical segment. Residues 343 to 385 (FCQPIFQFVESQSAKRWPDNKFITGEYKIHVPCCGDFSINFLR) lie on the Cytoplasmic side of the membrane. A helical membrane pass occupies residues 386-405 (LVWRTSYVVVTAVVAMIFPF). Topologically, residues 406-408 (FND) are extracellular. The helical transmembrane segment at 409 to 427 (FLGLIGAASFWPLTVYFPI) threads the bilayer. Topologically, residues 428–447 (EMHIAQKKIPKFSFTWTWLK) are cytoplasmic. The helical transmembrane segment at 448–468 (ILSWTCFIVSLVAAAGSVQGL) threads the bilayer. Residues 469–481 (IQSLKDFKPFQAP) are Extracellular-facing.

Belongs to the amino acid/polyamine transporter 2 family. Amino acid/auxin permease (AAAP) (TC 2.A.18.2) subfamily. Expressed in roots and leaves, and at lower levels in stems and flowers. Found in the xylem parenchyma.

The protein localises to the cell membrane. Its function is as follows. Amino acid-proton symporter. Stereospecific transporter with a broad specificity for tryptophan, proline, and neutral and acidic amino acids. Has an affinity for aspartate in a physiological range. Involved in the uptake of amino acids diffusing out of the xylem tracheids into the xylem parenchyma. The chain is Amino acid permease 6 (AAP6) from Arabidopsis thaliana (Mouse-ear cress).